A 466-amino-acid chain; its full sequence is Uronate isomerase (466 aa).

This sequence belongs to the metallo-dependent hydrolases superfamily. Uronate isomerase family.

It carries out the reaction D-glucuronate = D-fructuronate. The catalysed reaction is aldehydo-D-galacturonate = keto-D-tagaturonate. It participates in carbohydrate metabolism; pentose and glucuronate interconversion. The protein is Uronate isomerase of Rhizorhabdus wittichii (strain DSM 6014 / CCUG 31198 / JCM 15750 / NBRC 105917 / EY 4224 / RW1) (Sphingomonas wittichii).